The sequence spans 525 residues: GMP synthase [glutamine-hydrolyzing] (525 aa).

The Glutamine amidotransferase type-1 domain occupies 9–207 (RILILDFGSQ…VLDICGCEAL (199 aa)). Cys-86 serves as the catalytic Nucleophile. Residues His-181 and Glu-183 contribute to the active site. Residues 208-400 (WTPSKIAEDA…LGLPYDMVYR (193 aa)) form the GMPS ATP-PPase domain. 235 to 241 (SGGVDSS) contributes to the ATP binding site.

In terms of assembly, homodimer.

The enzyme catalyses XMP + L-glutamine + ATP + H2O = GMP + L-glutamate + AMP + diphosphate + 2 H(+). It participates in purine metabolism; GMP biosynthesis; GMP from XMP (L-Gln route): step 1/1. In terms of biological role, catalyzes the synthesis of GMP from XMP. The sequence is that of GMP synthase [glutamine-hydrolyzing] from Pseudomonas fluorescens (strain Pf0-1).